The sequence spans 890 residues: Alanine--tRNA ligase (890 aa).

Zn(2+) contacts are provided by H573, H577, C675, and H679.

This sequence belongs to the class-II aminoacyl-tRNA synthetase family. Zn(2+) serves as cofactor.

It localises to the cytoplasm. The catalysed reaction is tRNA(Ala) + L-alanine + ATP = L-alanyl-tRNA(Ala) + AMP + diphosphate. Its function is as follows. Catalyzes the attachment of alanine to tRNA(Ala) in a two-step reaction: alanine is first activated by ATP to form Ala-AMP and then transferred to the acceptor end of tRNA(Ala). Also edits incorrectly charged Ser-tRNA(Ala) and Gly-tRNA(Ala) via its editing domain. The protein is Alanine--tRNA ligase of Streptomyces avermitilis (strain ATCC 31267 / DSM 46492 / JCM 5070 / NBRC 14893 / NCIMB 12804 / NRRL 8165 / MA-4680).